A 180-amino-acid chain; its full sequence is Nucleoside-triphosphatase THEP1 (180 aa).

ATP is bound by residues 9 to 16 and 99 to 106; these read GRPGIGKT and VVIVDEVG.

The protein belongs to the THEP1 NTPase family.

It carries out the reaction a ribonucleoside 5'-triphosphate + H2O = a ribonucleoside 5'-diphosphate + phosphate + H(+). In terms of biological role, has nucleotide phosphatase activity towards ATP, GTP, CTP, TTP and UTP. May hydrolyze nucleoside diphosphates with lower efficiency. In Methanopyrus kandleri (strain AV19 / DSM 6324 / JCM 9639 / NBRC 100938), this protein is Nucleoside-triphosphatase THEP1.